Reading from the N-terminus, the 163-residue chain is Nucleotide-binding protein MS1759 (163 aa).

The protein belongs to the YajQ family.

Nucleotide-binding protein. This chain is Nucleotide-binding protein MS1759, found in Mannheimia succiniciproducens (strain KCTC 0769BP / MBEL55E).